Reading from the N-terminus, the 110-residue chain is Integration host factor subunit beta (110 aa).

It belongs to the bacterial histone-like protein family. As to quaternary structure, heterodimer of an alpha and a beta chain.

This protein is one of the two subunits of integration host factor, a specific DNA-binding protein that functions in genetic recombination as well as in transcriptional and translational control. The polypeptide is Integration host factor subunit beta (Parvibaculum lavamentivorans (strain DS-1 / DSM 13023 / NCIMB 13966)).